Here is a 249-residue protein sequence, read N- to C-terminus: tRNA 2'-phosphotransferase 1 (249 aa).

N-acetylmethionine is present on methionine 1. 2 disordered regions span residues 1–25 and 220–249; these read MNAP…RNVQ and KPLS…KIQQ.

Belongs to the KptA/TPT1 family.

It catalyses the reaction 2'-phospho-[ligated tRNA] + NAD(+) = mature tRNA + ADP-alpha-D-ribose 1'',2''-cyclic phosphate + nicotinamide. Its function is as follows. Catalyzes the last step of tRNA splicing, the transfer of the splice junction 2'-phosphate from ligated tRNA to NAD to produce ADP-ribose 1''-2'' cyclic phosphate. The chain is tRNA 2'-phosphotransferase 1 (Trpt1) from Mus musculus (Mouse).